A 227-amino-acid polypeptide reads, in one-letter code: MIKAVLIDIEGTVSPISFVKEVLFPYSKERIEEFIKKNLDNPDIKRIIQDIKNIEGRDLTLEEVVNTLIRWIDQDKKITPLKEIQGYIWEEGFRSGRLKAPVYEDAYRKLKEWKEKNIPMYIYSSGSVKAQKLFFSHTEYGDLTGFFSGFFDTKTGNKKDPQSYLKIAEAVGLKPENILFLSDNPDEIRAAAEAGMKVIKISRPEDSPYIDNFPYRQVDSFDQITDL.

This sequence belongs to the HAD-like hydrolase superfamily. MasA/MtnC family. In terms of assembly, monomer. Requires Mg(2+) as cofactor.

It carries out the reaction 5-methylsulfanyl-2,3-dioxopentyl phosphate + H2O = 1,2-dihydroxy-5-(methylsulfanyl)pent-1-en-3-one + phosphate. It participates in amino-acid biosynthesis; L-methionine biosynthesis via salvage pathway; L-methionine from S-methyl-5-thio-alpha-D-ribose 1-phosphate: step 3/6. It functions in the pathway amino-acid biosynthesis; L-methionine biosynthesis via salvage pathway; L-methionine from S-methyl-5-thio-alpha-D-ribose 1-phosphate: step 4/6. Functionally, bifunctional enzyme that catalyzes the enolization of 2,3-diketo-5-methylthiopentyl-1-phosphate (DK-MTP-1-P) into the intermediate 2-hydroxy-3-keto-5-methylthiopentenyl-1-phosphate (HK-MTPenyl-1-P), which is then dephosphorylated to form the acireductone 1,2-dihydroxy-3-keto-5-methylthiopentene (DHK-MTPene). The protein is Enolase-phosphatase E1 of Persephonella marina (strain DSM 14350 / EX-H1).